The chain runs to 358 residues: COP9 signalosome complex subunit 5b (358 aa).

The residue at position 1 (M1) is an N-acetylmethionine. Residues 59–196 (VKISALALLK…IGAFRTYSKG (138 aa)) enclose the MPN domain. 3 residues coordinate Zn(2+): H142, H144, and D155. Residues 142-155 (HSHPGYGCWLSGID) carry the JAMM motif motif. Residues 338–349 (MRQSNNKSPTDS) are compositionally biased toward polar residues. The tract at residues 338 to 358 (MRQSNNKSPTDSSDPDPMITY) is disordered.

This sequence belongs to the peptidase M67A family. CSN5 subfamily. In terms of assembly, component of the CSN complex, probably composed of CSN1, CSN2, CSN3, CSN4, CSN5 (CSN5A or CSN5B), CSN6 (CSN6A or CSN6B), CSN7 and CSN8. CSN5A or CSN5B are present within distinct CSN complexes each containing only one copy of CSN5. Interacts with itself. In the complex, it is located in the center and probably interacts directly with CSN4 and CSN6A or CSN6B. Also exists as monomeric form. Interacts with CYT1 in vitro and in planta. Interacts with FLZ3. Requires a divalent metal cation as cofactor. Ubiquitously expressed. Highly expressed in flowers and roots. Expressed at lower level in seedlings and siliques.

It localises to the cytoplasm. It is found in the nucleus. Probable protease subunit of the COP9 signalosome complex (CSN), a complex involved in various cellular and developmental processes such as photomorphogenesis and auxin and jasmonate responses. The CSN complex is an essential regulator of the ubiquitin (Ubl) conjugation pathway by mediating the deneddylation of the cullin subunits of the SCF-type E3 ligase complexes, leading to decrease the Ubl ligase activity of SCF. In the complex, it probably acts as the catalytic center that mediates the cleavage of Nedd8 from cullins. It however has no metalloprotease activity by itself and requires the other subunits of the CSN complex. The CSN complex is involved in repression of photomorphogenesis in darkness by regulating the activity of COP1-containing Ubl ligase complexes. The complex is also required for degradation of PSIAA6 by regulating the activity of the Ubl ligase SCF-TIR complex. Not involved in CSN's deneddylation/derubylation activity. Essential for the structural integrity of the CSN holocomplex. In Arabidopsis thaliana (Mouse-ear cress), this protein is COP9 signalosome complex subunit 5b.